The chain runs to 209 residues: Redox-sensing transcriptional repressor Rex (209 aa).

A DNA-binding region (H-T-H motif) is located at residues 16 to 55 (LYYRFIQNLSLSGKQRVSSAELSEAVKVDSATIRRDFSYF). 90–95 (GVGNLG) provides a ligand contact to NAD(+).

It belongs to the transcriptional regulatory Rex family. Homodimer.

It is found in the cytoplasm. Its function is as follows. Modulates transcription in response to changes in cellular NADH/NAD(+) redox state. The sequence is that of Redox-sensing transcriptional repressor Rex from Bacillus cereus (strain AH187).